The chain runs to 477 residues: MRVLFATAEAWPLAKTGGLGDVAFGLTRALAELDCDVRLLMPAYPGTVEQLEGEVRRHTAELAGEGVTLIEGRLPGTGVGVWLLDDPPLFARVGGPYATAGGDAWPDNHWRFLRLSQVAAALAAGDLLDWRAEVLHGNDWQTALAPVFLRDRADRPATVFGIHNLAYRGLFPAELYPRLGLPAELWQPEGLEFYGQLAFIKGSLVFADTLVTVSPTYAREIQTPAFGWGLDGLLHHRRDRLFGIVNGIDTATWDPGSDRHLVAQYTGPDDRARAANRRAVARAVGLSEGEGPILGFVGRLVEQKGVDLILAALPRLLAAGAQLALLGAGDHRLETALRAAAEQHPGQVGVVIGYDEALAHQIEAGSDLFLMPSRFEPCGLNQLYSLRYGTPPVVYPTGGLADTVVDVDAHPQSGNGFHLAASDGAALAAAVERALAHWQDRPTWHAIQARGMAGTYSWAASAQAYQDLYRQVVASRG.

Lysine 15 lines the ADP-alpha-D-glucose pocket.

The protein belongs to the glycosyltransferase 1 family. Bacterial/plant glycogen synthase subfamily.

The enzyme catalyses [(1-&gt;4)-alpha-D-glucosyl](n) + ADP-alpha-D-glucose = [(1-&gt;4)-alpha-D-glucosyl](n+1) + ADP + H(+). It participates in glycan biosynthesis; glycogen biosynthesis. Synthesizes alpha-1,4-glucan chains using ADP-glucose. This is Glycogen synthase from Halorhodospira halophila (strain DSM 244 / SL1) (Ectothiorhodospira halophila (strain DSM 244 / SL1)).